The chain runs to 200 residues: Rho GDP-dissociation inhibitor 2 (200 aa).

The segment at 1 to 40 (MTEKAPEPHVEEDDDELDGKLNYKPPPQKSLKELQEMDKD) is disordered. Threonine 2 is subject to N-acetylthreonine. Residue lysine 20 is modified to N6-acetyllysine. At tyrosine 23 the chain carries Phosphotyrosine. N6-acetyllysine occurs at positions 24, 39, 46, 101, and 123. A compositionally biased stretch (basic and acidic residues) spans 30–40 (SLKELQEMDKD). Serine 144 carries the phosphoserine modification. Lysine 174 is modified (N6-acetyllysine).

It belongs to the Rho GDI family. As to quaternary structure, interacts with RHOA. Interacts with RAC1. Interacts with RAC2. Interacts with CDC42.

Its subcellular location is the cytoplasm. It is found in the cytosol. Its function is as follows. Regulates the GDP/GTP exchange reaction of the Rho proteins by inhibiting the dissociation of GDP from them, and the subsequent binding of GTP to them. Regulates reorganization of the actin cytoskeleton mediated by Rho family members. This Bos taurus (Bovine) protein is Rho GDP-dissociation inhibitor 2 (ARHGDIB).